The following is a 323-amino-acid chain: Palmitoyltransferase ZDHHC20-B (323 aa).

At 1–14 the chain is on the cytoplasmic side; the sequence is MAPTHVLRCCQRGL. Residues 15–35 traverse the membrane as a helical segment; the sequence is AWIPVIFIALVVCWSYYAYVV. Topologically, residues 36 to 41 are lumenal; it reads ELCLLV. A helical membrane pass occupies residues 42–62; that stretch reads YLVVFHLSFVMFVWSYWKTIF. Residues 63–157 lie on the Cytoplasmic side of the membrane; it reads TKPANPSKEF…NNCVGFSNYK (95 aa). Residues 114–164 form the DHHC domain; the sequence is RYCDRCQVIKPDRCHHCSACDMCVLKMDHHCPWVNNCVGFSNYKFFILFLT. Cysteine 144 functions as the S-palmitoyl cysteine intermediate in the catalytic mechanism. The chain crosses the membrane as a helical span at residues 158–178; sequence FFILFLTYSLVYCLFIAASVL. At 179–195 the chain is on the lumenal side; the sequence is QYFIKFWTSDLPESHAK. A helical membrane pass occupies residues 196–219; it reads FHVLFLFFVAAMFCISILSLFTYH. Residues 220–323 are Cytoplasmic-facing; it reads LWLVGKNRST…KQAKKKKTDE (104 aa).

Belongs to the DHHC palmitoyltransferase family.

The protein resides in the golgi apparatus membrane. Its subcellular location is the cell membrane. The protein localises to the cytoplasm. It is found in the perinuclear region. It localises to the endoplasmic reticulum membrane. The protein resides in the endoplasmic reticulum-Golgi intermediate compartment membrane. It carries out the reaction L-cysteinyl-[protein] + hexadecanoyl-CoA = S-hexadecanoyl-L-cysteinyl-[protein] + CoA. The catalysed reaction is L-cysteinyl-[protein] + tetradecanoyl-CoA = S-tetradecanoyl-L-cysteinyl-[protein] + CoA. The enzyme catalyses L-cysteinyl-[protein] + octadecanoyl-CoA = S-octadecanoyl-L-cysteinyl-[protein] + CoA. In terms of biological role, palmitoyltransferase that could catalyze the addition of palmitate onto various protein substrates. Catalyzes palmitoylation of Cys residues on protein substrates and has a preference for acyl-CoA with C16 fatty acid chains but may also utilize acyl-CoA with C14 and C18 fatty acid chains. The protein is Palmitoyltransferase ZDHHC20-B (zdhhc20b) of Danio rerio (Zebrafish).